The chain runs to 354 residues: Serine/threonine-protein kinase-transforming protein mos (354 aa).

Positions 74–350 constitute a Protein kinase domain; sequence VCLMHRLGSG…LLQRDLKAFR (277 aa). Residues 80–88 and Lys101 contribute to the ATP site; that span reads LGSGGFGSV. The active-site Proton acceptor is the Asp209.

Belongs to the protein kinase superfamily. Ser/Thr protein kinase family.

The catalysed reaction is L-seryl-[protein] + ATP = O-phospho-L-seryl-[protein] + ADP + H(+). It catalyses the reaction L-threonyl-[protein] + ATP = O-phospho-L-threonyl-[protein] + ADP + H(+). The protein is Serine/threonine-protein kinase-transforming protein mos (V-MOS) of Moloney murine sarcoma virus (strain ts110) (MoMSV).